The primary structure comprises 288 residues: Aquaporin PIP 1-3 (288 aa).

The tract at residues 1 to 30 is disordered; the sequence is MEGKEEDVRLGANRYTERQPIGTAAQGAEE. 2 helical membrane-spanning segments follow: residues 57–77 and 92–114; these read IAEF…VMGV and IAWS…SGGH. Positions 116-118 match the NPA 1 motif; the sequence is NPA. 3 helical membrane passes run 135–155, 177–197, and 211–231; these read VFYM…VKGF, GDGL…VFSA, and ILAP…TIPI. The NPA 2 motif lies at 237-239; it reads NPA. The chain crosses the membrane as a helical span at residues 259–279; the sequence is IFWVGPFIGAALAAIYHVVVI.

Belongs to the MIP/aquaporin (TC 1.A.8) family. PIP (TC 1.A.8.11) subfamily. As to expression, expressed in roots and leaves.

It localises to the cell membrane. Its function is as follows. Water channel required to facilitate the transport of water across cell membrane. Increases the capacity for root water uptake under water deficit. May play a role in drought avoidance in upland rice. The polypeptide is Aquaporin PIP 1-3 (PIP1-3) (Oryza sativa subsp. japonica (Rice)).